The primary structure comprises 487 residues: uncharacterized protein (487 aa).

The signal sequence occupies residues 1–31; it reads MRFHRQGISAIIGVLLIVLLGFCWKLSGSYG. Residues N40, N68, N150, N220, N304, N367, N442, and N448 are each glycosylated (N-linked (GlcNAc...) asparagine). The disordered stretch occupies residues 141 to 176; it reads LERRHGRFGNGTNGDHPKGPPPPPPPPDEKGRGSQK.

N-glycosylated.

This is an uncharacterized protein from Saccharomyces cerevisiae (strain ATCC 204508 / S288c) (Baker's yeast).